The sequence spans 235 residues: PRA1 family protein 1 (235 aa).

Polar residues predominate over residues 1–17; sequence MESNSNSNETMYGNPNI. The tract at residues 1 to 55 is disordered; it reads MESNSNSNETMYGNPNINMGFVDSGNSNIGNNTGSMSPPPQQQQQPQQASSTPAG. The segment covering 24-48 has biased composition (low complexity); that stretch reads SGNSNIGNNTGSMSPPPQQQQQPQQ. 2 consecutive transmembrane segments (helical) span residues 144 to 164 and 187 to 207; these read SVFF…LLFI and AFLS…LVGA.

The protein belongs to the PRA1 family.

It localises to the membrane. May act as a general Rab protein regulator. The sequence is that of PRA1 family protein 1 (prafA) from Dictyostelium discoideum (Social amoeba).